We begin with the raw amino-acid sequence, 1161 residues long: Lethal(2) giant larvae protein (1161 aa).

A phospho-regulated basic and hydrophobic (PRBH) motif region spans residues 15–86; that stretch reads DRHRLQKDLF…NNSASELNVQ (72 aa). 8 WD repeats span residues 39-72, 82-128, 131-167, 189-223, 231-263, 278-320, 328-358, and 380-464; these read SALA…LYGQ, ELNV…DGKL, VSSL…EPVI, SIRQ…QRAY, SVGL…PEPP, SINR…GHKV, VIDF…AYDL, and TCNY…YNFK. S473 and S484 each carry phosphoserine. WD repeat units lie at residues 513-594 and 603-664; these read KKIA…SGVL and TCMA…LRES. A Phosphoserine modification is found at S679. WD repeat units follow at residues 708–778, 787–832, 837–927, and 941–964; these read VRCL…KEIQ, GISI…LKPI, LTAN…LNAA, and CFTN…ALAT. 6 positions are modified to phosphoserine: S808, S869, S876, S887, S889, and S893. Phosphoserine is present on S1013. Residues 1141–1161 are disordered; it reads EKTNGDNKIGTPKTAPEESQF.

It belongs to the WD repeat L(2)GL family. As to quaternary structure, may form multimeric complexes. Interacts with mahj. Interacts with aPKC; leading to phosphorylation. Interacts with ball. In terms of processing, phosphorylated by aPKC which lowers lipid affinity and promotes dissociation from the cell cortex. In developing oocytes, aPKC-mediated phosphorylation restricts activity to the oocyte posterior and is required for oocyte polarity formation. In terms of tissue distribution, expressed in the epithelial cells of the digestive tract and in gonads.

It localises to the cytoplasm. Its subcellular location is the cell cortex. In terms of biological role, essential for the development of polarized epithelia, for cell polarity associated with asymmetric cell division of neuroblasts during development, and for oocyte polarity formation. Promotes the formation of actin-rich projections at the oocyte cortex and the posterior enrichment of par-1 which is required for oocyte polarization. Regulates the localization of axis-specifying morphogens such as stau and grk. Its function is as follows. Has an essential role in control of cell proliferation and differentiation during development and could act as a tumor suppressor. Has an accessory function in control of cell proliferation and differentiation during development. The protein is Lethal(2) giant larvae protein (l(2)gl) of Drosophila melanogaster (Fruit fly).